The primary structure comprises 166 residues: NAD(P)H-quinone oxidoreductase subunit I, chloroplastic (166 aa).

2 consecutive 4Fe-4S ferredoxin-type domains span residues 55–84 (GRIH…VDWK) and 95–124 (LNYS…MTEE). Residues cysteine 64, cysteine 67, cysteine 70, cysteine 74, cysteine 104, cysteine 107, cysteine 110, and cysteine 114 each coordinate [4Fe-4S] cluster.

This sequence belongs to the complex I 23 kDa subunit family. As to quaternary structure, NDH is composed of at least 16 different subunits, 5 of which are encoded in the nucleus. It depends on [4Fe-4S] cluster as a cofactor.

The protein localises to the plastid. It localises to the chloroplast thylakoid membrane. It carries out the reaction a plastoquinone + NADH + (n+1) H(+)(in) = a plastoquinol + NAD(+) + n H(+)(out). The enzyme catalyses a plastoquinone + NADPH + (n+1) H(+)(in) = a plastoquinol + NADP(+) + n H(+)(out). Functionally, NDH shuttles electrons from NAD(P)H:plastoquinone, via FMN and iron-sulfur (Fe-S) centers, to quinones in the photosynthetic chain and possibly in a chloroplast respiratory chain. The immediate electron acceptor for the enzyme in this species is believed to be plastoquinone. Couples the redox reaction to proton translocation, and thus conserves the redox energy in a proton gradient. The protein is NAD(P)H-quinone oxidoreductase subunit I, chloroplastic of Hulsea algida (Pacific hulsea).